We begin with the raw amino-acid sequence, 367 residues long: Putative F-box protein At3g21120 (367 aa).

An F-box domain is found at 1-43; it reads MHLPEDLVLEILSKVPAVSLARFRSTCRRWNALVVDGSFAKKH.

In Arabidopsis thaliana (Mouse-ear cress), this protein is Putative F-box protein At3g21120.